Reading from the N-terminus, the 430-residue chain is Serine hydroxymethyltransferase (430 aa).

(6S)-5,6,7,8-tetrahydrofolate-binding positions include Leu123 and 127–129 (GHL). Lys232 is subject to N6-(pyridoxal phosphate)lysine. (6S)-5,6,7,8-tetrahydrofolate is bound at residue Glu248.

This sequence belongs to the SHMT family. Homodimer. Pyridoxal 5'-phosphate serves as cofactor.

It localises to the cytoplasm. The catalysed reaction is (6R)-5,10-methylene-5,6,7,8-tetrahydrofolate + glycine + H2O = (6S)-5,6,7,8-tetrahydrofolate + L-serine. The protein operates within one-carbon metabolism; tetrahydrofolate interconversion. It functions in the pathway amino-acid biosynthesis; glycine biosynthesis; glycine from L-serine: step 1/1. In terms of biological role, catalyzes the reversible interconversion of serine and glycine with tetrahydrofolate (THF) serving as the one-carbon carrier. This reaction serves as the major source of one-carbon groups required for the biosynthesis of purines, thymidylate, methionine, and other important biomolecules. Also exhibits THF-independent aldolase activity toward beta-hydroxyamino acids, producing glycine and aldehydes, via a retro-aldol mechanism. The sequence is that of Serine hydroxymethyltransferase from Anaplasma marginale (strain Florida).